An 848-amino-acid chain; its full sequence is F-BAR domain only protein 2 (848 aa).

One can recognise an F-BAR domain in the interval 4-250 (PYFLENFWGN…NMENTSVESL (247 aa)). Residues 87-114 (HMELVRKLQELIKEVQKYVDEQAKNHKK) are a coiled coil. Disordered stretches follow at residues 292–316 (IPGR…NASN) and 404–526 (LSPT…RAES). A phosphoserine mark is found at serine 405 and serine 417. Residues 445-460 (PFGPTSTGSSSSLPQS) are compositionally biased toward low complexity. The region spanning 580 to 848 (ALPIAVAFTE…FATGRYMADC (269 aa)) is the MHD domain.

The protein belongs to the FCHO family. As to quaternary structure, homodimer.

It localises to the membrane. It is found in the clathrin-coated pit. Functionally, may function in an early step of clathrin-mediated endocytosis. This chain is F-BAR domain only protein 2 (fcho2), found in Danio rerio (Zebrafish).